Reading from the N-terminus, the 106-residue chain is Iron-sulfur cluster assembly protein CyaY (106 aa).

Belongs to the frataxin family.

Its function is as follows. Involved in iron-sulfur (Fe-S) cluster assembly. May act as a regulator of Fe-S biogenesis. This is Iron-sulfur cluster assembly protein CyaY from Yersinia enterocolitica serotype O:8 / biotype 1B (strain NCTC 13174 / 8081).